Here is a 377-residue protein sequence, read N- to C-terminus: Anhydro-N-acetylmuramic acid kinase (377 aa).

14–21 is a binding site for ATP; sequence GTSLDGVD.

Belongs to the anhydro-N-acetylmuramic acid kinase family.

The enzyme catalyses 1,6-anhydro-N-acetyl-beta-muramate + ATP + H2O = N-acetyl-D-muramate 6-phosphate + ADP + H(+). The protein operates within amino-sugar metabolism; 1,6-anhydro-N-acetylmuramate degradation. Its pathway is cell wall biogenesis; peptidoglycan recycling. Functionally, catalyzes the specific phosphorylation of 1,6-anhydro-N-acetylmuramic acid (anhMurNAc) with the simultaneous cleavage of the 1,6-anhydro ring, generating MurNAc-6-P. Is required for the utilization of anhMurNAc either imported from the medium or derived from its own cell wall murein, and thus plays a role in cell wall recycling. The polypeptide is Anhydro-N-acetylmuramic acid kinase (Pasteurella multocida (strain Pm70)).